The sequence spans 87 residues: Small ribosomal subunit protein bS20 (87 aa).

A disordered region spans residues 1 to 21; the sequence is MANIKQQIKRNKTNEKRRLKN. The span at 7-20 shows a compositional bias: basic residues; sequence QIKRNKTNEKRRLK.

Belongs to the bacterial ribosomal protein bS20 family.

In terms of biological role, binds directly to 16S ribosomal RNA. This chain is Small ribosomal subunit protein bS20, found in Phytoplasma mali (strain AT).